The chain runs to 461 residues: NADH-ubiquinone oxidoreductase chain 4 (461 aa).

13 helical membrane passes run 20 to 42, 61 to 81, 93 to 113, 114 to 134, 147 to 167, 197 to 217, 225 to 245, 258 to 278, 285 to 304, 309 to 331, 351 to 371, 393 to 413, and 436 to 456; these read PAWLWPTMTTNSLLVATISLTWL, PLSTPLLILTCWLLPLMILAS, QRSFISLLISLQTFLIMAFGA, TEIILFYIMFEATLIPTLIII, GTYFLFYTVMGSLPLLVALLM, WTACLLAFLVKMPLYGVHLWL, PIAGSMVLAAVLLKLGGYGMM, LAYPFIILALWGIIMTGSICL, SLIAYSSVGHMGLVAAGILT, GFTGATVLMIAHGLTSSALFCLA, VILPLMTFWWLMMNLANLALP, TLTMTGLGMLITAIYSLHMFL, and LLMTMHALPMLLLILKPELIW.

The protein belongs to the complex I subunit 4 family.

It is found in the mitochondrion membrane. It catalyses the reaction a ubiquinone + NADH + 5 H(+)(in) = a ubiquinol + NAD(+) + 4 H(+)(out). Core subunit of the mitochondrial membrane respiratory chain NADH dehydrogenase (Complex I) that is believed to belong to the minimal assembly required for catalysis. Complex I functions in the transfer of electrons from NADH to the respiratory chain. The immediate electron acceptor for the enzyme is believed to be ubiquinone. The sequence is that of NADH-ubiquinone oxidoreductase chain 4 (MT-ND4) from Latimeria chalumnae (Coelacanth).